The following is a 661-amino-acid chain: Potassium voltage-gated channel subfamily KQT member 1 (661 aa).

Disordered stretches follow at residues M1 to G29 and E42 to P88. At M1–W119 the chain is on the cytoplasmic side. A Phosphoserine; by PKA modification is found at S27. Over residues V54 to S85 the composition is skewed to pro residues. Residues K120–L141 form a helical membrane-spanning segment. The Extracellular segment spans residues S142–T152. Residues G153–W175 traverse the membrane as a helical segment. Over S176 to R191 the chain is Cytoplasmic. Residues F192–K217 traverse the membrane as a helical segment. At G218–A225 the chain is on the extracellular side. Residues I226–D241 form a helical; Voltage-sensor membrane-spanning segment. The interaction with KCNE3 stretch occupies residues M237–G245. At R242 to Q259 the chain is on the cytoplasmic side. Q243 contacts a 1,2-diacyl-sn-glycero-3-phospho-(1D-myo-inositol-4,5-bisphosphate). A helical membrane pass occupies residues E260–A282. Residues E283–Y298 are Extracellular-facing. An N-linked (GlcNAc...) asparagine glycan is attached at N288. An intramembrane region (pore-forming) is located at residues A299–P319. The Extracellular segment spans residues Q320–T321. A helical membrane pass occupies residues W322 to G347. The Cytoplasmic portion of the chain corresponds to S348–S661. Residues A369–Y381 are interaction with CALM. Phosphoserine occurs at positions 406 and 408. The segment at K514–F528 is interaction with CALM; calcium-dependent. The tract at residues P534 to L571 is interaction with KCNE1 C-terminus. Positions S584 to Q620 form a coiled coil. An interaction with AKAP9 region spans residues I587–L615. The C-terminal assembly domain (tetramerization) stretch occupies residues G588–H619. A disordered region spans residues H624–S661.

It belongs to the potassium channel family. KQT (TC 1.A.1.15) subfamily. Kv7.1/KCNQ1 sub-subfamily. Tetramer. Heterotetramer with KCNE1; targets to the membrane raft. Interacts (via C-terminus) with CALM; forms a heterooctameric structure (with 4:4 KCNQ1:CALM stoichiometry) in a calcium-independent manner. Interacts with AKAP9; targets protein kinase A (PKA) catalytic and regulatory subunits and protein phosphatase 1 (PP1) to the KCNQ1-KCNE1 complex, allowing PKA-mediated phosphorylation and increase of delayed rectifier potassium channel activity. Interacts with KCNE2; form a heterooligomer complex that targets to the membrane raft and leading to currents with an apparently instantaneous activation, a rapid deactivation process and a linear current-voltage relationship and decreases the amplitude of the outward current. Interacts with AP2M1; mediates estrogen-induced internalization via clathrin-coated vesicles. Interacts with NEDD4L; promotes internalization and decreases I(Ks) currents. Interacts with USP2; counteracts the NEDD4L-specific down-regulation of I(Ks) and restore plasma membrane localization. Heterotetramer with KCNQ5; has a voltage-gated potassium channel activity. Interacts with KCNE3; four KCNE3 molecules are bound to one KCNQ1 tetramer (4:4 KCNQ1:KCNE3 stoichiometry); alters membrane raft localization; affects KCNQ1 structure and gating properties. Interacts with KCNE4; impairs KCNQ1 localization in lipid rafts and inhibits voltage-gated potassium channel activity. Interacts with KCNE5; impairs KCNQ1 localization in lipid rafts and only conducts current upon strong and continued depolarization. Interacts with SLC5A3; forms coregulatory channel-transporter complexes that modulate Na(+)-coupled myo-inositol influx through the transporter. Post-translationally, phosphorylation at Ser-27 by PKA; increases delayed rectifier potassium channel activity of the KCNQ1-KCNE1 complex through a macromolecular complex that includes PKA, PP1, and the targeting protein AKAP9. Ubiquitinated by NEDD4L; promotes internalization. The ubiquitinylated form is internalized through a clathrin-mediated endocytosis by interacting with AP2M1 and is recycled back to the cell membrane via RAB4A and RAB11A. In terms of processing, deubiquitinated by USP2; counteracts the NEDD4L-specific down-regulation of I(Ks) and restores the membrane localization.

It is found in the cell membrane. The protein resides in the cytoplasmic vesicle membrane. It localises to the early endosome. The protein localises to the membrane raft. Its subcellular location is the endoplasmic reticulum. It is found in the basolateral cell membrane. The protein resides in the apical cell membrane. It carries out the reaction K(+)(in) = K(+)(out). PIP2 molecule is essential to activate KCNQ channels by inducing the coupling of the voltage-sensing domain (VSD) and the pore-forming domain (PD). Upon channel activation, PIP2 disrupts the VSD-calmodulin/CALM interactions, causing the release of CALM from the VSD which triggers the opening of the gate. Calcium potentiates KCNQ1 channel current through calcium-bound CALM. Calcium-bound CALM competes with PIP2 to stabilize the channel open state. In terms of biological role, pore-forming subunit of the voltage-gated potassium (Kv) channel involved in the regulation of cardiomyocyte excitability and important in normal development and functions of myocardium, inner ear, stomach and colon. Associates with KCNE beta subunits that modulates current kinetics. Induces a voltage-dependent by rapidly activating and slowly deactivating potassium-selective outward current. Also promotes a delayed voltage activated potassium current showing outward rectification characteristic. During beta-adrenergic receptor stimulation participates in cardiac repolarization by associating with KCNE1 to form the I(Ks) cardiac potassium current that increases the amplitude and slows down the activation kinetics of outward potassium current I(Ks). Muscarinic agonist oxotremorine-M strongly suppresses KCNQ1/KCNE1 current. When associated with KCNE3, forms the potassium channel that is important for cyclic AMP-stimulated intestinal secretion of chloride ions. This interaction with KCNE3 is reduced by 17beta-estradiol, resulting in the reduction of currents. During conditions of increased substrate load, maintains the driving force for proximal tubular and intestinal sodium ions absorption, gastric acid secretion, and cAMP-induced jejunal chloride ions secretion. Allows the provision of potassium ions to the luminal membrane of the secretory canaliculus in the resting state as well as during stimulated acid secretion. When associated with KCNE2, forms a heterooligomer complex leading to currents with an apparently instantaneous activation, a rapid deactivation process and a linear current-voltage relationship and decreases the amplitude of the outward current. When associated with KCNE4, inhibits voltage-gated potassium channel activity. When associated with KCNE5, this complex only conducts current upon strong and continued depolarization. Also forms a heterotetramer with KCNQ5 that has a voltage-gated potassium channel activity. Binds with phosphatidylinositol 4,5-bisphosphate. KCNQ1-KCNE2 channel associates with Na(+)-coupled myo-inositol symporter in the apical membrane of choroid plexus epithelium and regulates the myo-inositol gradient between blood and cerebrospinal fluid with an impact on neuron excitability. In Oryctolagus cuniculus (Rabbit), this protein is Potassium voltage-gated channel subfamily KQT member 1.